The primary structure comprises 333 residues: Phosphoribosylformylglycinamidine cyclo-ligase (333 aa).

The protein belongs to the AIR synthase family.

Its subcellular location is the cytoplasm. It carries out the reaction 2-formamido-N(1)-(5-O-phospho-beta-D-ribosyl)acetamidine + ATP = 5-amino-1-(5-phospho-beta-D-ribosyl)imidazole + ADP + phosphate + H(+). Its pathway is purine metabolism; IMP biosynthesis via de novo pathway; 5-amino-1-(5-phospho-D-ribosyl)imidazole from N(2)-formyl-N(1)-(5-phospho-D-ribosyl)glycinamide: step 2/2. This is Phosphoribosylformylglycinamidine cyclo-ligase from Methanosarcina mazei (strain ATCC BAA-159 / DSM 3647 / Goe1 / Go1 / JCM 11833 / OCM 88) (Methanosarcina frisia).